The chain runs to 468 residues: Replication factor C large subunit (468 aa).

Glycine 50–threonine 57 contributes to the ATP binding site. The tract at residues glutamate 422–glycine 456 is disordered. Acidic residues predominate over residues lysine 429–lysine 444.

The protein belongs to the activator 1 small subunits family. RfcL subfamily. Heteromultimer composed of small subunits (RfcS) and large subunits (RfcL).

Functionally, part of the RFC clamp loader complex which loads the PCNA sliding clamp onto DNA. The polypeptide is Replication factor C large subunit (Pyrococcus horikoshii (strain ATCC 700860 / DSM 12428 / JCM 9974 / NBRC 100139 / OT-3)).